The chain runs to 587 residues: Aspartate--tRNA ligase (587 aa).

E174 lines the L-aspartate pocket. The aspartate stretch occupies residues 198-201 (QITK). Position 220 (R220) interacts with L-aspartate. Residues 220–222 (RDE) and Q229 contribute to the ATP site. Residue H443 coordinates L-aspartate. E477 contributes to the ATP binding site. R484 serves as a coordination point for L-aspartate. Position 529–532 (529–532 (GLDR)) interacts with ATP.

It belongs to the class-II aminoacyl-tRNA synthetase family. Type 1 subfamily. In terms of assembly, homodimer.

The protein resides in the cytoplasm. It catalyses the reaction tRNA(Asp) + L-aspartate + ATP = L-aspartyl-tRNA(Asp) + AMP + diphosphate. Catalyzes the attachment of L-aspartate to tRNA(Asp) in a two-step reaction: L-aspartate is first activated by ATP to form Asp-AMP and then transferred to the acceptor end of tRNA(Asp). The sequence is that of Aspartate--tRNA ligase from Streptococcus pneumoniae serotype 2 (strain D39 / NCTC 7466).